The following is a 292-amino-acid chain: Ornithine decarboxylase antizyme (292 aa).

Belongs to the ODC antizyme family. As to quaternary structure, interacts with ODC/SPE1 and thereby sterically blocks ODC homodimerization.

Functionally, ornithine decarboxylase (ODC) antizyme protein that negatively regulates ODC activity and intracellular polyamine biosynthesis in response to increased intracellular polyamine levels. Binds to ODC/SPE1 monomers, inhibiting the assembly of the functional ODC homodimer, and targets the monomers for ubiquitin-independent proteolytic destruction by the 26S proteasome. This Saccharomyces cerevisiae (strain ATCC 204508 / S288c) (Baker's yeast) protein is Ornithine decarboxylase antizyme (OAZ1).